We begin with the raw amino-acid sequence, 336 residues long: MYYPFVRKALFQLDPERAHEFTFQQLRRITGTPFEALVRQKVPAKPVNCMGLTFKNPLGLAAGLDKDGECIDALGAMGFGSIEIGTVTPRPQPGNDKPRLFRLVDAEGLINRMGFNNLGVDNLVENVKKAHYDGVLGINIGKNKDTPVEQGKDDYLICMEKIYAYAGYIAINISSPNTPGLRTLQYGEALDDLLTAIKNKQNDLQAMHHKYVPIAVKIAPDLSEDELIQVADSLVRHNIDGVIATNTTLDRSLVQGMKNCDQTGGLSGRPLQLKSTEIIRRLSLELNGRLPIIGVGGIDSVIAAREKIAAGASLVQIYSGFIFKGPPLIKEIVTHI.

Residues 62–66 and threonine 86 contribute to the FMN site; that span reads AGLDK. Position 66 (lysine 66) interacts with substrate. Position 111–115 (111–115) interacts with substrate; it reads NRMGF. Asparagine 139 and asparagine 172 together coordinate FMN. Asparagine 172 lines the substrate pocket. Residue serine 175 is the Nucleophile of the active site. Asparagine 177 is a substrate binding site. Residues lysine 217 and threonine 245 each contribute to the FMN site. Residue 246–247 participates in substrate binding; it reads NT. Residues glycine 268, glycine 297, and 318–319 each bind FMN; that span reads YS.

The protein belongs to the dihydroorotate dehydrogenase family. Type 2 subfamily. Monomer. The cofactor is FMN.

It localises to the cell membrane. The catalysed reaction is (S)-dihydroorotate + a quinone = orotate + a quinol. It functions in the pathway pyrimidine metabolism; UMP biosynthesis via de novo pathway; orotate from (S)-dihydroorotate (quinone route): step 1/1. In terms of biological role, catalyzes the conversion of dihydroorotate to orotate with quinone as electron acceptor. The polypeptide is Dihydroorotate dehydrogenase (quinone) (Shigella flexneri serotype 5b (strain 8401)).